Here is a 297-residue protein sequence, read N- to C-terminus: Phosphoribosylaminoimidazole-succinocarboxamide synthase (297 aa).

It belongs to the SAICAR synthetase family.

The catalysed reaction is 5-amino-1-(5-phospho-D-ribosyl)imidazole-4-carboxylate + L-aspartate + ATP = (2S)-2-[5-amino-1-(5-phospho-beta-D-ribosyl)imidazole-4-carboxamido]succinate + ADP + phosphate + 2 H(+). The protein operates within purine metabolism; IMP biosynthesis via de novo pathway; 5-amino-1-(5-phospho-D-ribosyl)imidazole-4-carboxamide from 5-amino-1-(5-phospho-D-ribosyl)imidazole-4-carboxylate: step 1/2. This chain is Phosphoribosylaminoimidazole-succinocarboxamide synthase, found in Methylobacillus flagellatus (strain ATCC 51484 / DSM 6875 / VKM B-1610 / KT).